Consider the following 131-residue polypeptide: MLRKAIADIEAKYLRTDLPEMRAGDSVRVHTKIKEGDKERIQVFEGVVIAYRKGAPGSSMFTVRKVSYGVGVERMFPVHSPRIDKIEVVGHGGVRRSRLYFLRNLQGKAARLHQEEGPGAADAAHAAPTPA.

The protein belongs to the bacterial ribosomal protein bL19 family.

Functionally, this protein is located at the 30S-50S ribosomal subunit interface and may play a role in the structure and function of the aminoacyl-tRNA binding site. The sequence is that of Large ribosomal subunit protein bL19 from Anaeromyxobacter dehalogenans (strain 2CP-C).